The primary structure comprises 315 residues: uncharacterized protein (315 aa).

Residues 1-38 (MDVLLSLPQPELFKTTVIPFLANRNIIKSEAILSNLHS) are Cytoplasmic-facing. A helical transmembrane segment spans residues 39–59 (IFYVAIFYHIWFLFGKWILFP). Residues 60-101 (HLVKWKLDYDQKHNVKKDEKTTSERQAQHYKKKYTSLINQSS) lie on the Lumenal side of the membrane. A TLC domain is found at 95–302 (SLINQSSVHL…MVSVAAKVLK (208 aa)). Residues 102–122 (VHLISLLQSIVVLYYSLKFLL) form a helical membrane-spanning segment. Residues 123–144 (DPKASAEPYQTSHSRVFTENRD) lie on the Cytoplasmic side of the membrane. The helical transmembrane segment at 145-165 (TQVICIFAIGYFVWDIYISTM) threads the bilayer. The Lumenal segment spans residues 166 to 170 (YSTFP). Residues 171 to 190 (FVVHGIISTVVFCIGLKPYI) form a helical membrane-spanning segment. The Cytoplasmic portion of the chain corresponds to 191–225 (QYYAPVFLMFELSNPSLNFRWFGIKFLPQKSKFCS). The chain crosses the membrane as a helical span at residues 226 to 246 (LLLLLNNLTLMVVFFAARIAW). Residues 247-264 (GWFQIGKLCYDFYQVRNE) are Lumenal-facing. Residues 265-285 (PGFLVFDTIVILAGNFVLDIL) traverse the membrane as a helical segment. Over 286–315 (NVIWFSTMVSVAAKVLKKGESVDKVTKNEQ) the chain is Cytoplasmic.

It localises to the endoplasmic reticulum membrane. This is an uncharacterized protein from Saccharomyces cerevisiae (strain ATCC 204508 / S288c) (Baker's yeast).